Reading from the N-terminus, the 77-residue chain is uncharacterized protein (77 aa).

Positions 11–65 (FARLRREKGLTQEEVEARSGFSQQYLSSLERGRRNPTVITLYELAQALGVSHVEL) constitute an HTH cro/C1-type domain. The H-T-H motif DNA-binding region spans 22-41 (QEEVEARSGFSQQYLSSLER).

This is an uncharacterized protein from Sinorhizobium fredii (strain NBRC 101917 / NGR234).